The sequence spans 256 residues: tRNA (guanine-N(7)-)-methyltransferase (256 aa).

Positions 17–45 (TCETVPGLPQKKHYRQRAHSNPHSDHDIE) are disordered. The segment covering 26-36 (QKKHYRQRAHS) has biased composition (basic residues). S-adenosyl-L-methionine is bound by residues glycine 74, 97 to 98 (EI), 132 to 133 (NA), and leucine 152. Residue aspartate 155 is part of the active site. 230–232 (TEE) provides a ligand contact to S-adenosyl-L-methionine.

The protein belongs to the class I-like SAM-binding methyltransferase superfamily. TrmB family.

The protein localises to the nucleus. It catalyses the reaction guanosine(46) in tRNA + S-adenosyl-L-methionine = N(7)-methylguanosine(46) in tRNA + S-adenosyl-L-homocysteine. Its pathway is tRNA modification; N(7)-methylguanine-tRNA biosynthesis. Catalyzes the formation of N(7)-methylguanine at position 46 (m7G46) in tRNA. The protein is tRNA (guanine-N(7)-)-methyltransferase of Caenorhabditis elegans.